The primary structure comprises 326 residues: Probable protein phosphatase 2C 61 (326 aa).

A PPM-type phosphatase domain is found at Leu42 to Leu316. The Mn(2+) site is built by Asp77, Gly78, Asp261, and Asp307.

It belongs to the PP2C family. The cofactor is Mg(2+). Requires Mn(2+) as cofactor.

It carries out the reaction O-phospho-L-seryl-[protein] + H2O = L-seryl-[protein] + phosphate. It catalyses the reaction O-phospho-L-threonyl-[protein] + H2O = L-threonyl-[protein] + phosphate. This is Probable protein phosphatase 2C 61 from Arabidopsis thaliana (Mouse-ear cress).